The primary structure comprises 4047 residues: Cubilin homolog (4047 aa).

An N-terminal signal peptide occupies residues 1–22; the sequence is MIPNLQLFLSLILFGLLNHVSS. Residues N56, N92, and N127 are each glycosylated (N-linked (GlcNAc...) asparagine). The region spanning 168–205 is the EGF-like 1 domain; the sequence is AINACDPNKCSNGGTCIPSFGAKFTCLCPPHFTGTTCE. 26 disulfide bridges follow: C172–C183, C177–C193, C195–C204, C211–C227, C221–C236, C238–C247, C310–C321, C315–C330, C333–C344, C350–C363, C357–C372, C375–C386, C392–C403, C397–C418, C420–C434, C442–C453, C447–C463, C465–C474, C480–C491, C485–C500, C502–C511, C518–C544, C577–C601, C645–C667, C696–C719, and C769–C801. Residues 207 to 248 enclose the EGF-like 2; calcium-binding domain; it reads DIDECSVYNGTTAGCQNNGTCINNRGGFECQCQSGYHGSLCQ. N-linked (GlcNAc...) asparagine glycans are attached at residues N215 and N224. Residues 306 to 345 enclose the EGF-like 3; calcium-binding domain; it reads DVNECESNPCHPGVDCINLPGSFVCSGCPKGYKTDGNVCI. The 42-residue stretch at 346–387 folds into the EGF-like 4; calcium-binding domain; sequence DVNECEGEIRVCSPLSKCHNTLGSYYCDSCPTGYSGDGGNCV. 3 EGF-like domains span residues 388–435, 438–475, and 476–512; these read KDDS…EGCV, ASNV…KFCE, and KTSP…RACE. 10 CUB domains span residues 518 to 641, 645 to 763, 769 to 934, 934 to 1061, 1065 to 1182, 1188 to 1300, 1304 to 1427, 1428 to 1558, 1560 to 1680, and 1691 to 1841; these read CGSH…WETV, CGYR…YKFT, CGAE…YEML, LCEK…YKTS, CGGV…FEAV, CDFT…YETI, CGGR…FTTL, CNGI…WNTL, CSRD…VEFV, and CGQV…MIPK. N-linked (GlcNAc...) asparagine glycosylation is found at N528, N537, and N583. 3 N-linked (GlcNAc...) asparagine glycosylation sites follow: N775, N806, and N811. Cysteines 877 and 896 form a disulfide. Residue N942 is glycosylated (N-linked (GlcNAc...) asparagine). Intrachain disulfides connect C1065/C1091, C1120/C1145, and C1188/C1211. N-linked (GlcNAc...) asparagine glycosylation is present at N1133. N1229 is a glycosylation site (N-linked (GlcNAc...) asparagine). Residues C1234 and C1262 are joined by a disulfide bond. N-linked (GlcNAc...) asparagine glycosylation occurs at N1294. The cysteines at positions 1304 and 1330 are disulfide-linked. A glycan (N-linked (GlcNAc...) asparagine) is linked at N1353. 3 disulfide bridges follow: C1428–C1455, C1488–C1522, and C1560–C1586. N-linked (GlcNAc...) asparagine glycosylation is present at N1513. N1613, N1631, N1648, and N1674 each carry an N-linked (GlcNAc...) asparagine glycan. The cysteines at positions 1614 and 1641 are disulfide-linked. C1691 and C1720 are disulfide-bonded. N-linked (GlcNAc...) asparagine glycosylation is found at N1762, N1782, N1866, and N1890. An intrachain disulfide couples C1955 to C1979. The 129-residue stretch at 1955-2083 folds into the CUB 11 domain; the sequence is CGGEVRHSQG…PLFKARYEKV (129 aa). N2005, N2016, and N2017 each carry an N-linked (GlcNAc...) asparagine glycan. C2006 and C2027 are disulfide-bonded. Positions 2052–2071 are disordered; it reads ASDGNDDDDDTPDIDQQDSN. Residues 2055–2067 show a composition bias toward acidic residues; sequence GNDDDDDTPDIDQ. N-linked (GlcNAc...) asparagine glycosylation is present at N2193. 2 cysteine pairs are disulfide-bonded: C2207–C2238 and C2265–C2295. CUB domains lie at 2207–2334, 2335–2463, 2467–2588, 2590–2717, and 2721–2859; these read CGGD…YRLT, CNSF…IKEQ, CPSG…YGIA, CGGT…VTMS, and CGGR…YMAI. N-linked (GlcNAc...) asparagine glycans are attached at residues N2301 and N2305. Cystine bridges form between C2335-C2368 and C2395-C2424. N2434 carries an N-linked (GlcNAc...) asparagine glycan. Intrachain disulfides connect C2467–C2498 and C2590–C2619. 4 N-linked (GlcNAc...) asparagine glycosylation sites follow: N2599, N2645, N2657, and N2692. C2646 and C2668 are disulfide-bonded. 2 disulfide bridges follow: C2721–C2747 and C2786–C2809. N-linked (GlcNAc...) asparagine glycosylation is found at N2811, N2845, N2875, and N2988. Disulfide bonds link C2996–C3025, C3052–C3074, C3127–C3154, and C3181–C3217. CUB domains lie at 2996-3121, 3127-3254, 3255-3385, 3387-3508, 3515-3641, 3645-3783, and 3786-3900; these read CGGV…YEFL, CGYH…WEAE, CGAI…YSIN, CGDN…VISS, CGGK…YSIV, CGGW…YNIL, and CNRT…YYTV. N3235 carries an N-linked (GlcNAc...) asparagine glycan. 3 cysteine pairs are disulfide-bonded: C3255–C3281, C3315–C3335, and C3387–C3418. Residues N3421 and N3461 are each glycosylated (N-linked (GlcNAc...) asparagine). 2 disulfide bridges follow: C3445–C3468 and C3515–C3544. An N-linked (GlcNAc...) asparagine glycan is attached at N3635. 2 cysteine pairs are disulfide-bonded: C3645–C3680 and C3708–C3742. 5 N-linked (GlcNAc...) asparagine glycosylation sites follow: N3770, N3787, N3812, N3858, and N3930. Cystine bridges form between C3786/C3815 and C3845/C3863.

It is found in the secreted. Its function is as follows. Cotransporter which plays a role in lipoprotein, vitamin and iron metabolism, by facilitating their uptake. This Caenorhabditis elegans protein is Cubilin homolog.